Here is a 118-residue protein sequence, read N- to C-terminus: Basic phospholipase A2 CM-III (118 aa).

Intrachain disulfides connect Cys11–Cys70, Cys26–Cys117, Cys28–Cys44, Cys43–Cys98, Cys50–Cys91, Cys59–Cys84, and Cys77–Cys89. The Ca(2+) site is built by Tyr27, Gly29, and Gly31. His47 is an active-site residue. Position 48 (Asp48) interacts with Ca(2+). A Coagulation factor Xa binding motif motif is present at residues 52-69 (EKAGKMGCWPYFTLYKYK). Asp92 is a catalytic residue.

This sequence belongs to the phospholipase A2 family. Group I subfamily. D49 sub-subfamily. Ca(2+) serves as cofactor. Expressed by the venom gland.

The protein localises to the secreted. The enzyme catalyses a 1,2-diacyl-sn-glycero-3-phosphocholine + H2O = a 1-acyl-sn-glycero-3-phosphocholine + a fatty acid + H(+). In terms of biological role, snake venom phospholipase A2 (PLA2) that shows several activities. It shows strong anticoagulant activity, probably by binding to coagulation factor Xa (F10) and inhibiting the formation of the prothrombinase complex, shows direct hemolytic action, causes neuromuscular blockade with a gradual contracture and a decreased sensitivity to ACh and KCl, abolishes twitches evoked by indirect stimulation earlier than those by direct stimulation (in the mouse phrenic nerve-diaphragm preparation), and causes myonecrosis when injected intramuscularly. PLA2 catalyzes the calcium-dependent hydrolysis of the 2-acyl groups in 3-sn-phosphoglycerides. In Naja mossambica (Mozambique spitting cobra), this protein is Basic phospholipase A2 CM-III.